Consider the following 66-residue polypeptide: Beta-defensin 13 (66 aa).

A signal peptide spans 1–22 (MRIFSLIVAGLVLLIQLHPAKG). Disulfide bonds link Cys-30–Cys-59, Cys-37–Cys-51, and Cys-41–Cys-60.

It belongs to the beta-defensin family.

The protein resides in the secreted. Functionally, has antibacterial activity. The sequence is that of Beta-defensin 13 (Defb13) from Rattus norvegicus (Rat).